The following is a 239-amino-acid chain: Ribonuclease PH (239 aa).

Phosphate is bound by residues Arg86 and 124–126; that span reads GTR.

Belongs to the RNase PH family. As to quaternary structure, homohexameric ring arranged as a trimer of dimers.

It carries out the reaction tRNA(n+1) + phosphate = tRNA(n) + a ribonucleoside 5'-diphosphate. Functionally, phosphorolytic 3'-5' exoribonuclease that plays an important role in tRNA 3'-end maturation. Removes nucleotide residues following the 3'-CCA terminus of tRNAs; can also add nucleotides to the ends of RNA molecules by using nucleoside diphosphates as substrates, but this may not be physiologically important. Probably plays a role in initiation of 16S rRNA degradation (leading to ribosome degradation) during starvation. This Rickettsia bellii (strain OSU 85-389) protein is Ribonuclease PH.